The sequence spans 65 residues: Photosystem II reaction center protein J (65 aa).

Residues 1-17 show a composition bias toward basic and acidic residues; that stretch reads MSTKLKGPDGRIPDRLP. Residues 1–20 form a disordered region; the sequence is MSTKLKGPDGRIPDRLPDGT. Residues 36–56 traverse the membrane as a helical segment; the sequence is LWLVATVGGMAVLSVLGLFFF.

The protein belongs to the PsbJ family. As to quaternary structure, PSII is composed of 1 copy each of membrane proteins PsbA, PsbB, PsbC, PsbD, PsbE, PsbF, PsbH, PsbI, PsbJ, PsbK, PsbL, PsbM, PsbT, PsbX, PsbY, Psb30/Ycf12, peripheral proteins PsbO, CyanoQ (PsbQ), PsbU, PsbV and a large number of cofactors. It forms dimeric complexes.

It localises to the cellular thylakoid membrane. One of the components of the core complex of photosystem II (PSII). PSII is a light-driven water:plastoquinone oxidoreductase that uses light energy to abstract electrons from H(2)O, generating O(2) and a proton gradient subsequently used for ATP formation. It consists of a core antenna complex that captures photons, and an electron transfer chain that converts photonic excitation into a charge separation. The protein is Photosystem II reaction center protein J of Prochlorococcus marinus (strain MIT 9303).